A 114-amino-acid chain; its full sequence is Iron-sulfur cluster insertion protein ErpA (114 aa).

Residues Cys-42, Cys-106, and Cys-108 each coordinate iron-sulfur cluster.

The protein belongs to the HesB/IscA family. As to quaternary structure, homodimer. The cofactor is iron-sulfur cluster.

In terms of biological role, required for insertion of 4Fe-4S clusters for at least IspG. The sequence is that of Iron-sulfur cluster insertion protein ErpA from Salmonella typhi.